The primary structure comprises 1342 residues: DNA-directed RNA polymerase subunit beta (1342 aa).

Belongs to the RNA polymerase beta chain family. In terms of assembly, the RNAP catalytic core consists of 2 alpha, 1 beta, 1 beta' and 1 omega subunit. When a sigma factor is associated with the core the holoenzyme is formed, which can initiate transcription.

It catalyses the reaction RNA(n) + a ribonucleoside 5'-triphosphate = RNA(n+1) + diphosphate. In terms of biological role, DNA-dependent RNA polymerase catalyzes the transcription of DNA into RNA using the four ribonucleoside triphosphates as substrates. This is DNA-directed RNA polymerase subunit beta from Shewanella amazonensis (strain ATCC BAA-1098 / SB2B).